Reading from the N-terminus, the 122-residue chain is Large ribosomal subunit protein uL14 (122 aa).

Belongs to the universal ribosomal protein uL14 family. In terms of assembly, part of the 50S ribosomal subunit. Forms a cluster with proteins L3 and L19. In the 70S ribosome, L14 and L19 interact and together make contacts with the 16S rRNA in bridges B5 and B8.

Functionally, binds to 23S rRNA. Forms part of two intersubunit bridges in the 70S ribosome. This Parafrankia sp. (strain EAN1pec) protein is Large ribosomal subunit protein uL14.